The primary structure comprises 61 residues: UPF0391 membrane protein Aave_0978 (61 aa).

Helical transmembrane passes span 5 to 25 and 33 to 53; these read AIIF…GVAA and ILFF…VLGV.

The protein belongs to the UPF0391 family.

It is found in the cell membrane. The sequence is that of UPF0391 membrane protein Aave_0978 from Paracidovorax citrulli (strain AAC00-1) (Acidovorax citrulli).